A 595-amino-acid chain; its full sequence is DNA primase (595 aa).

The CHC2-type zinc-finger motif lies at 38–62; that stretch reads CPFHQEKTPSFTVSDSKRFFYCFGC. A Toprim domain is found at 250–332; that stretch reads NHSILVEGYF…EKKISFIRLP (83 aa). Residues E256, D300, and D302 each contribute to the Mg(2+) site.

This sequence belongs to the DnaG primase family. As to quaternary structure, monomer. Interacts with DnaB. Zn(2+) is required as a cofactor. The cofactor is Mg(2+).

The catalysed reaction is ssDNA + n NTP = ssDNA/pppN(pN)n-1 hybrid + (n-1) diphosphate.. In terms of biological role, RNA polymerase that catalyzes the synthesis of short RNA molecules used as primers for DNA polymerase during DNA replication. The protein is DNA primase of Rickettsia felis (strain ATCC VR-1525 / URRWXCal2) (Rickettsia azadi).